Consider the following 314-residue polypeptide: Ribosomal protein L11 methyltransferase (314 aa).

S-adenosyl-L-methionine contacts are provided by Thr-161, Gly-182, Asp-204, and Asn-248.

This sequence belongs to the methyltransferase superfamily. PrmA family.

The protein localises to the cytoplasm. The enzyme catalyses L-lysyl-[protein] + 3 S-adenosyl-L-methionine = N(6),N(6),N(6)-trimethyl-L-lysyl-[protein] + 3 S-adenosyl-L-homocysteine + 3 H(+). In terms of biological role, methylates ribosomal protein L11. This Listeria innocua serovar 6a (strain ATCC BAA-680 / CLIP 11262) protein is Ribosomal protein L11 methyltransferase.